The primary structure comprises 61 residues: Photosystem II reaction center protein K (61 aa).

The propeptide occupies Met1–Asp24. A helical membrane pass occupies residues Ile36–Ala56.

Belongs to the PsbK family. As to quaternary structure, PSII is composed of 1 copy each of membrane proteins PsbA, PsbB, PsbC, PsbD, PsbE, PsbF, PsbH, PsbI, PsbJ, PsbK, PsbL, PsbM, PsbT, PsbX, PsbY, PsbZ, Psb30/Ycf12, at least 3 peripheral proteins of the oxygen-evolving complex and a large number of cofactors. It forms dimeric complexes.

The protein localises to the plastid. It localises to the chloroplast thylakoid membrane. In terms of biological role, one of the components of the core complex of photosystem II (PSII). PSII is a light-driven water:plastoquinone oxidoreductase that uses light energy to abstract electrons from H(2)O, generating O(2) and a proton gradient subsequently used for ATP formation. It consists of a core antenna complex that captures photons, and an electron transfer chain that converts photonic excitation into a charge separation. This chain is Photosystem II reaction center protein K, found in Lotus japonicus (Lotus corniculatus var. japonicus).